The sequence spans 300 residues: Flaviolin linalyltransferase (300 aa).

This sequence belongs to the aromatic prenyltransferase family. In terms of assembly, monomer.

It catalyses the reaction flaviolin + (2E)-geranyl diphosphate = 3-linalylflaviolin + diphosphate. Its activity is regulated as follows. Does not require magnesium or any other divalent metal ions for activity. Involved in the biosynthesis of furanonaphthoquinone I (FNQ I). Catalyzes C- and O-prenylations of different phenolic substrates. With flaviolin as substrate, catalyzes the formation of a carbon-carbon-bond between C-3 (rather than C-1) of geranyl diphosphate and C-3 of flaviolin. With 1,3-dihydroxynaphthalene and 4-hydroxybenzoate as substrates, catalyzes O-prenylations. The protein is Flaviolin linalyltransferase of Streptomyces virginiae (Streptomyces cinnamonensis).